The following is a 152-amino-acid chain: Transcriptional regulator MraZ (152 aa).

SpoVT-AbrB domains are found at residues 5-52 (ATLV…PLPE) and 81-124 (ASEC…DEQT).

Belongs to the MraZ family. Forms oligomers.

It is found in the cytoplasm. The protein resides in the nucleoid. Its function is as follows. Negatively regulates its own expression and that of the subsequent genes in the proximal part of the division and cell wall (dcw) gene cluster. Acts by binding directly to DNA. May also regulate the expression of genes outside the dcw cluster. This chain is Transcriptional regulator MraZ, found in Erwinia tasmaniensis (strain DSM 17950 / CFBP 7177 / CIP 109463 / NCPPB 4357 / Et1/99).